A 148-amino-acid chain; its full sequence is Large ribosomal subunit protein bL19 (148 aa).

Belongs to the bacterial ribosomal protein bL19 family.

This protein is located at the 30S-50S ribosomal subunit interface and may play a role in the structure and function of the aminoacyl-tRNA binding site. The sequence is that of Large ribosomal subunit protein bL19 from Paramagnetospirillum magneticum (strain ATCC 700264 / AMB-1) (Magnetospirillum magneticum).